The chain runs to 600 residues: Integrator complex subunit 11 (600 aa).

Zn(2+)-binding residues include H68, H70, D72, H73, H157, and D178. Residues 68-73 (HFHLDH) carry the HXHXDH motif motif. The active site involves E203. A Glycyl lysine isopeptide (Lys-Gly) (interchain with G-Cter in SUMO) cross-link involves residue K381. Residue H414 participates in Zn(2+) binding. Residues K462 and K475 each participate in a glycyl lysine isopeptide (Lys-Gly) (interchain with G-Cter in SUMO) cross-link. Residues 469–479 (LLPEAKKPRLL) carry the Nuclear localization signal motif.

It belongs to the metallo-beta-lactamase superfamily. RNA-metabolizing metallo-beta-lactamase-like family. INTS11 subfamily. As to quaternary structure, component of the Integrator complex, composed of core subunits INTS1, INTS2, INTS3, INTS4, INTS5, INTS6, INTS7, INTS8, INTS9/RC74, INTS10, INTS11/CPSF3L, INTS12, INTS13, INTS14 and INTS15. The core complex associates with protein phosphatase 2A subunits PPP2CA and PPP2R1A, to form the Integrator-PP2A (INTAC) complex. INTS11 is part of the RNA endonuclease subcomplex, composed of INTS4, INTS9, INTS11 and inositol hexakisphosphate (InsP6). Interacts with WDR73; interaction is required for the assembly of the RNA endonuclease subcomplex in the cytoplasm. Interacts with BRAT1; interaction is required for the assembly of the RNA endonuclease subcomplex and inhibits the endonuclease activity of INTS11 before formation of mature integrator complex. Zn(2+) is required as a cofactor. Sumoylated; sumoylation regulates its subcellular location and is required for integrator complex integrity.

Its subcellular location is the nucleus. It is found in the cytoplasm. Its activity is regulated as follows. The RNA endonuclease activity is inhibited by BRAT1 that forms hyrogen bond and hydrophobic interactions with the active site. Functionally, RNA endonuclease component of the integrator complex, a multiprotein complex that terminates RNA polymerase II (Pol II) transcription in the promoter-proximal region of genes. The integrator complex provides a quality checkpoint during transcription elongation by driving premature transcription termination of transcripts that are unfavorably configured for transcriptional elongation: the complex terminates transcription by (1) catalyzing dephosphorylation of the C-terminal domain (CTD) of Pol II subunit POLR2A/RPB1 and SUPT5H/SPT5, (2) degrading the exiting nascent RNA transcript via endonuclease activity and (3) promoting the release of Pol II from bound DNA. The integrator complex is also involved in terminating the synthesis of non-coding Pol II transcripts, such as enhancer RNAs (eRNAs), small nuclear RNAs (snRNAs), telomerase RNAs and long non-coding RNAs (lncRNAs). Within the integrator complex, INTS11 constitutes the RNA endonuclease subunit that degrades exiting nascent RNA transcripts. Mediates recruitment of cytoplasmic dynein to the nuclear envelope, probably as component of the integrator complex. The chain is Integrator complex subunit 11 (INTS11) from Pongo abelii (Sumatran orangutan).